Here is a 315-residue protein sequence, read N- to C-terminus: Malate dehydrogenase (315 aa).

NAD(+) contacts are provided by residues 7 to 12 (GAGNIG) and Asp-32. Substrate is bound by residues Arg-81 and Arg-87. NAD(+) is bound by residues Asn-94 and 117 to 119 (VTN). Positions 119 and 150 each coordinate substrate. His-174 (proton acceptor) is an active-site residue.

Belongs to the LDH/MDH superfamily. MDH type 3 family.

The catalysed reaction is (S)-malate + NAD(+) = oxaloacetate + NADH + H(+). Its function is as follows. Catalyzes the reversible oxidation of malate to oxaloacetate. In Neorickettsia sennetsu (strain ATCC VR-367 / Miyayama) (Ehrlichia sennetsu), this protein is Malate dehydrogenase.